Here is a 486-residue protein sequence, read N- to C-terminus: ATP-dependent 6-phosphofructokinase (486 aa).

ATP-binding positions include Gly105, 171-172, and 196-199; these read RG and GDGT. Position 197 (Asp197) interacts with Mg(2+). Residues 225 to 227, 270 to 272, Glu323, and 378 to 381 each bind substrate; these read TID, MGR, and YMIR. Asp227 acts as the Proton acceptor in catalysis. Positions 484 to 486 match the Peroxisomal targeting signal motif; sequence SKV.

It belongs to the phosphofructokinase type A (PFKA) family. PPi-dependent PFK group II subfamily. Atypical ATP-dependent clade 'X' sub-subfamily. In terms of assembly, homotetramer. Requires Mg(2+) as cofactor.

The protein localises to the glycosome. It carries out the reaction beta-D-fructose 6-phosphate + ATP = beta-D-fructose 1,6-bisphosphate + ADP + H(+). Its pathway is carbohydrate degradation; glycolysis; D-glyceraldehyde 3-phosphate and glycerone phosphate from D-glucose: step 3/4. With respect to regulation, allosterically activated by AMP. Functionally, catalyzes the phosphorylation of D-fructose 6-phosphate to fructose 1,6-bisphosphate by ATP, the first committing step of glycolysis. This is ATP-dependent 6-phosphofructokinase from Leishmania donovani.